Here is a 356-residue protein sequence, read N- to C-terminus: Methylthioribose-1-phosphate isomerase (356 aa).

Substrate-binding positions include 53–55 (RGA), R97, and Q203. The active-site Proton donor is D244. Residue 254–255 (NK) coordinates substrate.

This sequence belongs to the eIF-2B alpha/beta/delta subunits family. MtnA subfamily.

It carries out the reaction 5-(methylsulfanyl)-alpha-D-ribose 1-phosphate = 5-(methylsulfanyl)-D-ribulose 1-phosphate. It participates in amino-acid biosynthesis; L-methionine biosynthesis via salvage pathway; L-methionine from S-methyl-5-thio-alpha-D-ribose 1-phosphate: step 1/6. In terms of biological role, catalyzes the interconversion of methylthioribose-1-phosphate (MTR-1-P) into methylthioribulose-1-phosphate (MTRu-1-P). In Rhodopirellula baltica (strain DSM 10527 / NCIMB 13988 / SH1), this protein is Methylthioribose-1-phosphate isomerase.